The following is a 137-amino-acid chain: Small ribosomal subunit protein uS9 (137 aa).

Residues 103-137 (PPLKAEGYLTRDPRAKERKKYGLHKARKAPQYSKR) are disordered. A compositionally biased stretch (basic residues) spans 118-137 (KERKKYGLHKARKAPQYSKR).

It belongs to the universal ribosomal protein uS9 family.

This chain is Small ribosomal subunit protein uS9, found in Crocosphaera subtropica (strain ATCC 51142 / BH68) (Cyanothece sp. (strain ATCC 51142)).